The primary structure comprises 797 residues: Striatin-3 (797 aa).

The residue at position 1 (methionine 1) is an N-acetylmethionine. Gly residues-rich tracts occupy residues 1-12 and 33-43; these read MDELAGGGGGGP and GGNGAAGGGGP. Positions 1-60 are disordered; it reads MDELAGGGGGGPAMASPPRQQQGPGGNMSLSPGGNGAAGGGGPPATEGAGPAAGPELSRP. Residues 44–55 are compositionally biased toward low complexity; that stretch reads PATEGAGPAAGP. The interval 71-79 is caveolin-binding; the sequence is YIQHEWARF. A coiled-coil region spans residues 77–136; that stretch reads ARFEMERAHWEVERAELQARIAFLQGERKGQENLKKDLVRRIKMLEYALKQERAKYHKLK. Phosphothreonine is present on threonine 150. The calmodulin-binding stretch occupies residues 166–183; it reads QNSQLTWKQGRQLLRQYL. Serine 202, serine 214, serine 229, serine 257, and serine 335 each carry phosphoserine. The interval 313-336 is disordered; sequence DGEGAGEARSSGDGTEWDKDDLSP. WD repeat units lie at residues 478 to 517, 531 to 570, 584 to 623, 679 to 718, 721 to 760, and 767 to 796; these read SHFD…PAKK, AHIG…VDPY, AHTD…PCIC, QSSN…MIHS, AHLD…CVQE, and KLDE…AKVF.

It belongs to the WD repeat striatin family. As to quaternary structure, tetramerizes. Part of the core of STRIPAK complexes composed of PP2A catalytic and scaffolding subunits, the striatins (PP2A regulatory subunits), the striatin-associated proteins MOB4, STRIP1 and STRIP2, PDCD10 and members of the STE20 kinases, such as STK24 and STK26. The STRIPAK complex can be extended by adapter proteins such as SLMAP:SIKE1 or CTTNBP2NL. Interacts with CDC42BPB.

It is found in the cytoplasm. Its subcellular location is the membrane. Its function is as follows. Calmodulin-binding scaffolding protein which is the center of the striatin-interacting phosphatase and kinase (STRIPAK) complexes. STRIPAK complexes have critical roles in protein (de)phosphorylation and are regulators of multiple signaling pathways including Hippo, MAPK, nuclear receptor and cytoskeleton remodeling. Different types of STRIPAK complexes are involved in a variety of biological processes such as cell growth, differentiation, apoptosis, metabolism and immune regulation. The polypeptide is Striatin-3 (STRN3) (Bos taurus (Bovine)).